We begin with the raw amino-acid sequence, 448 residues long: MGKYFGTDGVRGVANTQLTPELAFKIGRVGGYVLTRHKQEGKPKVVIGRDTRISGQMLENALLAGLLSVGAEVVRLGVISTSGVAYLTRALGADAGVMISASHNPFPDNGIKFFGSNGFKLSDEVEAEVEQYLDAAEDTMPRPTGEQIGTVLEFLEGGQKYLSHLKSTVSERFDGLKVVLDCANGAVSSLAARLFADVDAEVITIGANPNGININDQCGSTHPERLVEEVLKHKADLGLSFDGDADRCIAVDNNGEIIDGDYIMAICARALKAKGKLNNNTVVTTVMANMGFFKGMEECSINTTKTAVGDRYVVEEMLRGGYNLGGEQSGHIVFLDYNTTGDGLLTGLQLLNIIKESGKPLSELKQVMVKYPQLLINVRVEDKSKLNGNEAIAQAIREVEEDLAGNGRVLVRPSGTEPIVRVMAEGPDAAQLEGLVNRIVDVVKQQLV.

Serine 102 serves as the catalytic Phosphoserine intermediate. Mg(2+) contacts are provided by serine 102, aspartate 242, aspartate 244, and aspartate 246. A Phosphoserine modification is found at serine 102.

The protein belongs to the phosphohexose mutase family. Mg(2+) serves as cofactor. Activated by phosphorylation.

It catalyses the reaction alpha-D-glucosamine 1-phosphate = D-glucosamine 6-phosphate. Its function is as follows. Catalyzes the conversion of glucosamine-6-phosphate to glucosamine-1-phosphate. The protein is Phosphoglucosamine mutase of Brevibacillus brevis (strain 47 / JCM 6285 / NBRC 100599).